The primary structure comprises 400 residues: Gap junction alpha-8 protein (400 aa).

The stretch at 2-12 is an intramembrane region; it reads GDWSFLGNILE. Residues 13-21 are Cytoplasmic-facing; it reads QVNEQSTVI. The helical transmembrane segment at 22-42 threads the bilayer; it reads GRVWLTVLFIFRILILGTAAE. Over 43–71 the chain is Extracellular; it reads LVWGDEQSDFVCNTQQPGCENVCYDEAFP. Cystine bridges form between C54–C196, C61–C190, and C65–C185. A helical membrane pass occupies residues 72–92; the sequence is ISHIRLWVLQIIFVSTPSLVY. The Cytoplasmic segment spans residues 93 to 156; that stretch reads FGHAVHHVRM…GTLLRTYILH (64 aa). The span at 104-118 shows a compositional bias: basic and acidic residues; the sequence is EKRKEREEAERRQQA. The disordered stretch occupies residues 104-139; that stretch reads EKRKEREEAERRQQAEVDEEKLPLAPNQNKGNNPDG. Over residues 129 to 138 the composition is skewed to polar residues; it reads PNQNKGNNPD. A helical transmembrane segment spans residues 157–177; the sequence is IIFKTLFEVGFIVGQYFLYGF. The Extracellular segment spans residues 178 to 205; the sequence is RILPLYRCGRWPCPNLVDCFVSRPTEKT. A helical transmembrane segment spans residues 206–226; sequence IFIMFMLVVAAVSLFLNLVEI. The Cytoplasmic segment spans residues 227 to 400; the sequence is SHLILKRIRR…SRARSDDLTV (174 aa). Residues 323 to 400 form a disordered region; it reads YAQAKEPEEE…SRARSDDLTV (78 aa). Over residues 327–336 the composition is skewed to basic and acidic residues; sequence KEPEEEKVKA. A compositionally biased stretch (acidic residues) spans 337–346; the sequence is EEEEEQEEEQ. Phosphoserine; by CK2 is present on S364. The segment covering 381-392 has biased composition (low complexity); sequence RSLSRLSKASSR.

Belongs to the connexin family. Alpha-type (group II) subfamily. In terms of assembly, a hemichannel or connexon is composed of a hexamer of connexins. A functional gap junction is formed by the apposition of two hemichannels. Forms heteromeric channels with GJA3. During early stages of lens development, interacts with the C-terminus of MIP. Proteolytically cleaved by caspase-3 during lens development. In terms of processing, phosphorylated on Ser-364; which inhibits cleavage by caspase-3.

It localises to the cell membrane. It is found in the cell junction. The protein localises to the gap junction. Its function is as follows. Structural component of eye lens gap junctions. Gap junctions are dodecameric channels that connect the cytoplasm of adjoining cells. They are formed by the docking of two hexameric hemichannels, one from each cell membrane. Small molecules and ions diffuse from one cell to a neighboring cell via the central pore. In Gallus gallus (Chicken), this protein is Gap junction alpha-8 protein (GJA8).